Reading from the N-terminus, the 100-residue chain is Small ribosomal subunit protein uS14c (100 aa).

Belongs to the universal ribosomal protein uS14 family. In terms of assembly, part of the 30S ribosomal subunit.

It localises to the plastid. Its subcellular location is the chloroplast. Functionally, binds 16S rRNA, required for the assembly of 30S particles. This is Small ribosomal subunit protein uS14c from Cucumis sativus (Cucumber).